Here is a 656-residue protein sequence, read N- to C-terminus: Anion exchange transporter (656 aa).

Over 1–75 (MTGAKRKKKS…LAFAVLSSVH (75 aa)) the chain is Cytoplasmic. Residues 76–96 (PVFGLYGSLFPAIIYAIFGMG) traverse the membrane as a helical segment. The Extracellular segment spans residues 97-144 (HHVATGTFALTSLISANAVERIVPQNMQNLTTQSNTSVLGLSDFEMQR). A helical transmembrane segment spans residues 145–165 (IHVAAAVSFLGGVIQVAMFVL). Glutamine 166 is a topological domain (cytoplasmic). A helical membrane pass occupies residues 167–187 (LGSATFVVTEPVISAMTTGAA). Residues 188–202 (THVVTSQVKYLLGMK) are Extracellular-facing. A helical membrane pass occupies residues 203–223 (MPYISGPLGFFYIYAYVFENI). At 224–227 (KSVR) the chain is on the cytoplasmic side. The helical transmembrane segment at 228 to 248 (LEALLLSLLSIVVLVLVKELN) threads the bilayer. Over 249–254 (EQFKRK) the chain is Extracellular. A helical transmembrane segment spans residues 255–275 (IKVVLPVDLVLIIAASFACYC). Over 276-306 (TNMENTYGLEVVGHIPQGIPSPRAPPMNILS) the chain is Cytoplasmic. The helical transmembrane segment at 307-327 (AVITEAFGVALVGYVASLALA) threads the bilayer. Topologically, residues 328 to 343 (QGSAKKFKYSIDDNQE) are extracellular. The chain crosses the membrane as a helical span at residues 344-364 (FLAHGLSNIVSSFFFCIPSAA). Over 365-383 (AMGRTAGLYSTGAKTQVAC) the chain is Cytoplasmic. 2 consecutive transmembrane segments (helical) span residues 384-404 (LISC…LYWL) and 405-425 (PMCV…IQFR). Over 426–448 (DLKKYWNVDKIDWGIWVSTYVFT) the chain is Extracellular. A helical membrane pass occupies residues 449-469 (ICFAANVGLLFGVVCTIAIVI). At 470–656 (GRFPRAMTVS…LSKLSDHSEV (187 aa)) the chain is on the cytoplasmic side. One can recognise an STAS domain in the interval 492–641 (TEMDSETLQQ…ESVSAAISHI (150 aa)). The interval 641–656 (IHSNKNLSKLSDHSEV) is membrane targeting.

The protein belongs to the SLC26A/SulP transporter (TC 2.A.53) family. Expressed in the thyroid gland (at protein level). Expressed in tonsillar high endothelial venule endothelial cells (HEVEC), placenta and in testis, expressed in a subgroup of basal cells in the epididymal ducts.

The protein resides in the basolateral cell membrane. It is found in the recycling endosome membrane. It localises to the apical cell membrane. The protein localises to the lateral cell membrane. The enzyme catalyses chloride(in) = chloride(out). It catalyses the reaction iodide(out) = iodide(in). The catalysed reaction is bromide(in) = bromide(out). It carries out the reaction oxalate(in) = oxalate(out). The enzyme catalyses nitrate(in) = nitrate(out). It catalyses the reaction sulfate(in) = sulfate(out). The catalysed reaction is thiocyanate(in) = thiocyanate(out). It carries out the reaction D-gluconate(in) = D-gluconate(out). The enzyme catalyses hydrogencarbonate(in) = hydrogencarbonate(out). It catalyses the reaction hydrogencarbonate(in) + chloride(out) = hydrogencarbonate(out) + chloride(in). Is active at both alkaline and acidic pH. Activity is inhibited by 4,4'-Di-isothiocyanatostilbene-2,2'-disulfonic acid (DIDS - an inhibitor of several anion channels and transporters). Functionally, acts as an anion channel mediating the transport of chloride, sulfate and oxalate ions. Mediates the transport of bromide, iodide, nitrate, gluconate, thiocyanate and bicarbonate ions. Its permeability towards bicarbonate is weak and increases when pH is above 7. Mediates thiocyanate transport in retinal pigment epithelium cells. Mediates iodide transport in the thyroid gland, playing an important role in the synthesis of thyroid hormones and the maintenance of thyroid function. Although it is an anion channel, according to PubMed:12736153 and PubMed:32119864 it has been shown to exhibit chloride-bicarbonate exchanger activity. The protein is Anion exchange transporter of Homo sapiens (Human).